The following is a 786-amino-acid chain: DENN domain-containing protein 1C (786 aa).

The 146-residue stretch at 13–158 folds into the uDENN domain; that stretch reads FDWFFEAGCP…MDSSITVRSE (146 aa). Residues 182 to 318 form the cDENN domain; the sequence is SLPSIPENRN…VVSLLRLRLR (137 aa). The dDENN domain occupies 320 to 398; that stretch reads VALSPGEGVS…ESRLEKLNAG (79 aa). The short motif at 401 to 405 is the FXDXF motif element; sequence FSDQF. The disordered stretch occupies residues 481-553; sequence KDGDSGLQRG…LSPGDTQNPW (73 aa). The segment covering 527–541 has biased composition (basic and acidic residues); sequence LKTEEGPSEPLRERS. A compositionally biased stretch (polar residues) spans 542-552; it reads PTLSPGDTQNP. Position 565 is a phosphoserine (serine 565). The short motif at 570-579 is the Clathrin box element; it reads DLLSEILDSL. Disordered stretches follow at residues 653-741 and 762-786; these read YSKN…QPPQ and SHVS…CFEN. The segment covering 657–675 has biased composition (low complexity); that stretch reads SCSQPFQQSPPSQGDPGPS. Residues 706 to 740 are compositionally biased toward polar residues; that stretch reads LLVSTEPNSDAVQRLQSISSPSCSHSAENPRNQPP. A compositionally biased stretch (basic and acidic residues) spans 770–786; the sequence is PQDKQPRVADLKKCFEN.

In terms of assembly, exhibits low nucleotide-independent RAB35-binding activity. Interacts with clathrin heavy chain/CLTC and with AP2A2, but not with AP2B1.

Its subcellular location is the cytoplasm. It localises to the cytosol. The protein localises to the cytoplasmic vesicle. It is found in the clathrin-coated vesicle. Guanine nucleotide exchange factor (GEF) which may activate RAB8A, RAB13 and RAB35. Promotes the exchange of GDP to GTP, converting inactive GDP-bound Rab proteins into their active GTP-bound form. This Mus musculus (Mouse) protein is DENN domain-containing protein 1C (Dennd1c).